We begin with the raw amino-acid sequence, 274 residues long: tRNA (mnm(5)s(2)U34)-methyltransferase, chloroplastic (274 aa).

The transit peptide at 1-50 (MAAGFFQAEMSILSSTLARSYSLPIRKTLMTFDFRIAMQRNPCLRIRRSC) directs the protein to the chloroplast. S-adenosyl-L-methionine is bound by residues Asn-108, Asn-110, Asp-134, Gln-136, and His-166.

It belongs to the methyltransferase superfamily. MnmM family.

It is found in the plastid. Its subcellular location is the chloroplast. It catalyses the reaction 5-aminomethyl-2-thiouridine(34) in tRNA + S-adenosyl-L-methionine = 5-methylaminomethyl-2-thiouridine(34) in tRNA + S-adenosyl-L-homocysteine + H(+). The protein operates within tRNA modification. Its function is as follows. Involved in the biosynthesis of 5-methylaminomethyl-2-thiouridine (mnm(5)s(2)U) at the wobble position (U34) in tRNA. Catalyzes the transfer of a methyl group from S-adenosyl-L-methionine to nm(5)s(2)U34 to form mnm(5)s(2)U34. The protein is tRNA (mnm(5)s(2)U34)-methyltransferase, chloroplastic of Arabidopsis thaliana (Mouse-ear cress).